Reading from the N-terminus, the 593-residue chain is Mitochondrial sodium/calcium exchanger protein (593 aa).

Positions 1-20 are cleaved as a signal peptide; sequence MGPLWALRVAGALSVAGVLA. Over 21 to 93 the chain is Extracellular; that stretch reads GHDGSQRAGQ…GAFCTFPSSL (73 aa). A glycan (N-linked (GlcNAc...) asparagine) is linked at asparagine 58. The helical transmembrane segment at 94–114 threads the bilayer; it reads LPLSVSLYALWLLYLFVILGV. The Cytoplasmic portion of the chain corresponds to 115 to 135; that stretch reads TAEKFFCPNLSAISTNLKLSH. Residues 136–158 form a helical membrane-spanning segment; that stretch reads NGLGVVGHSLTPALHGVTFLAFG. Over 159 to 178 the chain is Extracellular; that stretch reads NGAPDIFSAVVAFSDPRTAG. The helical transmembrane segment at 179–199 threads the bilayer; the sequence is LAVGAIFGAGIFVTTVVAGGI. Topologically, residues 200 to 215 are cytoplasmic; the sequence is ALVKPFAAASRPFLRD. The chain crosses the membrane as a helical span at residues 216–236; the sequence is VIFYMVAVFLTFLVLYFGYIT. Topologically, residues 237–239 are extracellular; that stretch reads LGE. The helical transmembrane segment at 240 to 260 threads the bilayer; the sequence is ALGYLGLYVFYVFTVVLCTWI. Topologically, residues 261 to 334 are cytoplasmic; it reads HRWQRGDGPP…KWRRKPWYWR (74 aa). A compositionally biased stretch (pro residues) spans 268–277; that stretch reads GPPPPGPWEP. Residues 268-291 form a disordered region; that stretch reads GPPPPGPWEPAIPTDAEEQESSGT. A helical membrane pass occupies residues 335-355; sequence LFKVLKVPVELVLLLTVPVVD. The Extracellular segment spans residues 356–369; it reads PDKDDLNWKRPLNC. Residues 370 to 390 form a helical membrane-spanning segment; the sequence is LHIVTGPLLCIFTLKSGAYGL. Topologically, residues 391-395 are cytoplasmic; it reads YQIQG. Residues 396-416 traverse the membrane as a helical segment; that stretch reads VFPVWALVALAGSVLAIIVFV. Topologically, residues 417-428 are extracellular; it reads TTHNEEPPKYHC. The helical transmembrane segment at 429-449 threads the bilayer; it reads VFAFLGFLSSAMWINAAATEL. The Cytoplasmic segment spans residues 450–454; that stretch reads VNILR. The chain crosses the membrane as a helical span at residues 455-475; it reads TLGIIFELSNTVLGLTLLAWG. The Extracellular portion of the chain corresponds to 476 to 496; sequence NSIGDTFSDLTMARQGYPRMA. Residues 497–517 traverse the membrane as a helical segment; the sequence is FSACFGGIIFNILVGVGLGCL. Residues 518 to 533 are Cytoplasmic-facing; sequence LQMTNSQMVVKLEPDS. A helical transmembrane segment spans residues 534–554; it reads LLVWILAGALGLSLVFSFVAV. Residues 555–564 lie on the Extracellular side of the membrane; that stretch reads PAQCFQLGKA. A helical transmembrane segment spans residues 565-585; it reads YGTCLILYYLVFLCVALLTEF. Residues 586–593 are Cytoplasmic-facing; sequence RVIHLAAT.

Belongs to the Ca(2+):cation antiporter (CaCA) (TC 2.A.19) family. SLC24A subfamily.

Its subcellular location is the mitochondrion inner membrane. The catalysed reaction is Ca(2+)(in) + 3 Na(+)(out) = Ca(2+)(out) + 3 Na(+)(in). In terms of biological role, mitochondrial sodium/calcium antiporter that mediates sodium-dependent calcium efflux from mitochondrion, by mediating the exchange of 3 sodium ions per 1 calcium ion. Plays a central role in mitochondrial calcium homeostasis by mediating mitochondrial calcium extrusion: calcium efflux is essential for mitochondrial function and cell survival, notably in cardiomyocytes. Involved in B-lymphocyte chemotaxis. This Gallus gallus (Chicken) protein is Mitochondrial sodium/calcium exchanger protein.